A 277-amino-acid polypeptide reads, in one-letter code: E3 ubiquitin-protein ligase CCNB1IP1 (277 aa).

The RING-type; atypical zinc-finger motif lies at C4–C51. A coiled-coil region spans residues Q127–R182.

Interacts with CCNB1, UBE2L3 and NF2. In terms of processing, ubiquitinated; autoubiquitinated. Post-translationally, phosphorylated by CDK1 on serine or threonine residues (in vitro). As to expression, highly expressed in heart. Detected at intermediate levels in liver and kidney, and at low levels in placenta, brain and lung.

The protein resides in the nucleus. It is found in the chromosome. The catalysed reaction is S-ubiquitinyl-[E2 ubiquitin-conjugating enzyme]-L-cysteine + [acceptor protein]-L-lysine = [E2 ubiquitin-conjugating enzyme]-L-cysteine + N(6)-ubiquitinyl-[acceptor protein]-L-lysine.. The protein operates within protein modification; protein ubiquitination. Ubiquitin E3 ligase that acts as a limiting factor for crossing-over during meiosis: required during zygonema to limit the colocalization of RNF212 with MutS-gamma-associated recombination sites and thereby establish early differentiation of crossover and non-crossover sites. Later, it is directed by MutL-gamma to stably accumulate at designated crossover sites. Probably promotes the dissociation of RNF212 and MutS-gamma to allow the progression of recombination and the implementation of the final steps of crossing over. Modulates cyclin-B levels and participates in the regulation of cell cycle progression through the G2 phase. Overexpression causes delayed entry into mitosis. The sequence is that of E3 ubiquitin-protein ligase CCNB1IP1 (CCNB1IP1) from Homo sapiens (Human).